A 454-amino-acid polypeptide reads, in one-letter code: Inner membrane transport protein YajR (454 aa).

Over 1–14 the chain is Periplasmic; sequence MNDYKMTPGERRAT. Residues 15 to 35 traverse the membrane as a helical segment; it reads WGLGTVFSLRMLGMFMVLPVL. The Cytoplasmic segment spans residues 36–47; it reads TTYGMALQGASE. A helical transmembrane segment spans residues 48-68; sequence ALIGIAIGIYGLTQAVFQIPF. Residues 69 to 84 are Periplasmic-facing; that stretch reads GLLSDRIGRKPLIVGG. A helical transmembrane segment spans residues 85-105; sequence LAVFAAGSVIAALSDSIWGII. The Cytoplasmic segment spans residues 106 to 137; sequence LGRALQGSGAIAAAVMALLSDLTREQNRTKAM. A helical transmembrane segment spans residues 138 to 158; sequence AFIGVSFGITFAIAMVLGPII. The Periplasmic segment spans residues 159-165; that stretch reads THKLGLH. The helical transmembrane segment at 166-186 threads the bilayer; the sequence is ALFWMIAILATTGIALTIWVV. The Cytoplasmic segment spans residues 187-216; sequence PNSSTHVLNRESGMVKGSFSKVLAEPRLLK. Residues 217-237 traverse the membrane as a helical segment; it reads LNFGIMCLHILLMSTFVALPG. Residues 238–252 lie on the Periplasmic side of the membrane; the sequence is QLADAGFPAAEHWKV. A helical membrane pass occupies residues 253-273; that stretch reads YLATMLIAFGSVVPFIIYAEV. The Cytoplasmic portion of the chain corresponds to 274 to 279; sequence KRKMKQ. A helical transmembrane segment spans residues 280–300; that stretch reads VFVFCVGLIVVAEIVLWNAQT. Over 301–306 the chain is Periplasmic; it reads QFWQLV. Residues 307-327 traverse the membrane as a helical segment; it reads VGVQLFFVAFNLMEALLPSLI. At 328-340 the chain is on the cytoplasmic side; that stretch reads SKESPAGYKGTAM. Residues 341-361 traverse the membrane as a helical segment; that stretch reads GVYSTSQFLGVAIGGSLGGWI. At 362–363 the chain is on the periplasmic side; that stretch reads NG. The helical transmembrane segment at 364-384 threads the bilayer; sequence MFDGQGVFLAGAMLAAVWLTV. The Cytoplasmic segment spans residues 385–454; the sequence is ASTMKEPPYV…FEIEQAIRQA (70 aa).

Belongs to the major facilitator superfamily.

The protein localises to the cell inner membrane. The chain is Inner membrane transport protein YajR (yajR) from Escherichia coli (strain K12).